Consider the following 189-residue polypeptide: Class A basic helix-loop-helix protein 15 (189 aa).

Basic residues predominate over residues 1 to 12 (MKTKNRPPRRRA). 2 disordered regions span residues 1–85 (MKTK…ERER) and 167–189 (TEAQPQGHLQRYSTQIHSFREGT). Phosphothreonine is present on T25. The segment covering 68–85 (GRRDSSIQRRLESNERER) has biased composition (basic and acidic residues). The bHLH domain maps to 75–127 (QRRLESNERERQRMHKLNNAFQALREVIPHVRADKKLSKIETLTLAKNYIKSL).

Forms homodimers or heterodimers with TCF3 gene products E12 and E47. These dimers bind to the E-box site, however, heterodimer with MYOD1 does not bind target DNA. In terms of tissue distribution, expressed in brain, liver, spleen and skeletal muscle.

The protein resides in the nucleus. Its function is as follows. Plays a role in controlling the transcriptional activity of MYOD1, ensuring that expanding myoblast populations remain undifferentiated. Repression may occur through muscle-specific E-box occupancy by homodimers. May also negatively regulate bHLH-mediated transcription through an N-terminal repressor domain. Serves as a key regulator of acinar cell function, stability, and identity. Also required for normal organelle localization in exocrine cells and for mitochondrial calcium ion transport. May function as a unique regulator of gene expression in several different embryonic and postnatal cell lineages. Binds to the E-box consensus sequence 5'-CANNTG-3'. The polypeptide is Class A basic helix-loop-helix protein 15 (BHLHA15) (Homo sapiens (Human)).